The chain runs to 617 residues: Syncytin-A (617 aa).

Positions 1–17 (MVRPWVFCLLLFPCSSA) are cleaved as a signal peptide. At 18–544 (YSDSWMPLVN…WIQWLGLGPW (527 aa)) the chain is on the extracellular side. Residue Asn-27 is glycosylated (N-linked (GlcNAc...) asparagine). Residues 44 to 47 (CWVC) carry the CXXC motif. Cystine bridges form between Cys-44–Cys-47, Cys-44–Cys-505, and Cys-497–Cys-504. Asn-272 and Asn-365 each carry an N-linked (GlcNAc...) asparagine glycan. The interval 420–440 (LLPLLAGLGIASALGLGIAGI) is fusion peptide. The CX6CC signature appears at 497-505 (CLFLQEECC). Residues 545 to 565 (LPSWLTSLMAPILFILVLLVF) traverse the membrane as a helical segment. The Cytoplasmic portion of the chain corresponds to 566–617 (RPCLLNCLTHSVSRRMSSFIHTTTEGHVDKILLLRESQYKRLPQEPPEEDAV).

Belongs to the gamma type-C retroviral envelope protein family. The mature protein consists of a trimer of SU-TM heterodimers. The SU-TM heterodimers are attached by a labile interchain disulfide bond. Post-translationally, synthesized as an inactive precursor that is heavily N-glycosylated and processed likely by furin in the Golgi to yield the mature SU and TM proteins. The cleavage site between SU and TM requires the minimal sequence [KR]-X-[KR]-R. The CXXC motif is highly conserved across a broad range of retroviral envelope proteins. It is thought to participate in the formation of a labile disulfide bond possibly with the CX6CC motif present in the transmembrane protein. Isomerization of the intersubunit disulfide bond to an SU intrachain disulfide bond is thought to occur upon receptor recognition in order to allow membrane fusion. Highly expressed in placenta where it localizes to syncytiotrophoblasts of the labyrinthine zona. Specifically localizes to syncytiotrophoblast layer I (SynT-I). Also detected at very low levels in hippocampus, brain, testis and ovary.

Its subcellular location is the cell membrane. This endogenous retroviral envelope protein has retained its original fusogenic properties. Together with Synb, participates in trophoblast fusion and the formation of a syncytium during placenta morphogenesis. Syna is essential for placental development and is specifically required for formation of syncytiotrophoblast layer I (SynT-I). Promotes muscle myoblast fusion. Does not have immunosuppressive activity. This chain is Syncytin-A, found in Mus musculus (Mouse).